Consider the following 463-residue polypeptide: MSSDSQVLYSQIPAIDTLLRTPACAALQAQYGSQLVTQALRSLQQQARHAIQRQQALPDWCVDWGVACTRRLAETLQPAMRRVFNLTGTVLHTNLGRALLPDTAIAAAAGAMGAPVTLEYDLDDAGRGHRDRAIADRLCALTGAEDACIVNNNAAAVLLMLATLAPGRDVIVSRGELVEIGGAFRIPDVMTQAGCRLREVGTTNRTHLHDYRQAIGEHSALLMKVHTSNYAIAGFTAAVSEAELAALGQEYGLPVISDLGSGSLLDMAHYGLPAEPMPQRMLADGVDLVSFSGDKLLGGPQAGIIVGRRELIHRLQRHPLKRALRCGKMTLAALDATLQLYQQPEKLRQALPTLRHLTREASEIAACGERLLARLRPHYEEAFVLTLEPCLSQIGSGSLPVDRLPSHAITLTPRDGRGGTLTALADRWRALPCPVIGRLQEGKLWLDLRCLDDEQALLQELCQ.

Residue K295 is modified to N6-(pyridoxal phosphate)lysine.

This sequence belongs to the SelA family. In terms of assembly, homodecamer; pentamer of dimers. Binds only one seryl-tRNA(Sec) per dimer. The cofactor is pyridoxal 5'-phosphate.

It is found in the cytoplasm. The enzyme catalyses L-seryl-tRNA(Sec) + selenophosphate + H(+) = L-selenocysteinyl-tRNA(Sec) + phosphate. It functions in the pathway aminoacyl-tRNA biosynthesis; selenocysteinyl-tRNA(Sec) biosynthesis; selenocysteinyl-tRNA(Sec) from L-seryl-tRNA(Sec) (bacterial route): step 1/1. Its function is as follows. Converts seryl-tRNA(Sec) to selenocysteinyl-tRNA(Sec) required for selenoprotein biosynthesis. This chain is L-seryl-tRNA(Sec) selenium transferase, found in Edwardsiella ictaluri (strain 93-146).